The primary structure comprises 348 residues: Mediator of RNA polymerase II transcription subunit 18 (348 aa).

A compositionally biased stretch (basic and acidic residues) spans Met152–Val218. Residues Met152–Gly227 are disordered. The stretch at Asp167–Gly223 forms a coiled coil.

It belongs to the Mediator complex subunit 18 family. Component of the Mediator complex.

Its subcellular location is the nucleus. In terms of biological role, component of the Mediator complex, a coactivator involved in the regulated transcription of nearly all RNA polymerase II-dependent genes. Mediator functions as a bridge to convey information from gene-specific regulatory proteins to the basal RNA polymerase II transcription machinery. Mediator is recruited to promoters by direct interactions with regulatory proteins and serves as a scaffold for the assembly of a functional preinitiation complex with RNA polymerase II and the general transcription factors. This is Mediator of RNA polymerase II transcription subunit 18 (SRB5) from Scheffersomyces stipitis (strain ATCC 58785 / CBS 6054 / NBRC 10063 / NRRL Y-11545) (Yeast).